Reading from the N-terminus, the 37-residue chain is Cytochrome b6-f complex subunit 5 (37 aa).

A helical membrane pass occupies residues 5–25 (LLSGIVLGLVPITLAGLFVTA).

It belongs to the PetG family. As to quaternary structure, the 4 large subunits of the cytochrome b6-f complex are cytochrome b6, subunit IV (17 kDa polypeptide, PetD), cytochrome f and the Rieske protein, while the 4 small subunits are PetG, PetL, PetM and PetN. The complex functions as a dimer.

The protein localises to the plastid. It is found in the chloroplast thylakoid membrane. In terms of biological role, component of the cytochrome b6-f complex, which mediates electron transfer between photosystem II (PSII) and photosystem I (PSI), cyclic electron flow around PSI, and state transitions. PetG is required for either the stability or assembly of the cytochrome b6-f complex. This is Cytochrome b6-f complex subunit 5 from Gnetum parvifolium (Small-leaved jointfir).